Consider the following 520-residue polypeptide: MSQQVIIFDTTLRDGEQALQASLSVKEKLQIALALERMGVDVMEVGFPVSSPGDFESVRTIAQQMKNSRVCALARCVDKDIDVAAEALRIAEAFRIHVFLATSTLHIESKLKRSFDDVLAMAVHSVKRARNYTDDVEFSCEDAGRTPIDNLCRIVEAAINAGATTINIPDTVGYTTPYQFGGIITDLYQRVPNIDKAIISVHCHDDLGMSVANSITAVQAGARQVEGTINGLGERAGNCSLEEVIMAIKVRENMLGVHTNINHQEIYRTSQLVSKLCNMPIPANKAIVGSNAFAHSSGIHQDGVLKNRENYEIMTPQSIGLKEVQLNLTSRSGRAAVKHRMEEMGYQDKDYNLDSLYDAFLKLADKKGQVFDYDLEALAFINKQQEEPEHYRLDYFSVQSGSSVMATASVKLVCGEEIKSEAATGNGPVDAVYQAINRITDYPIELVKYQLSANGQGKDALGQVDIVVDHKGRRFHGVGLATDIVESSAKALVHVLNNIWRAHQVEIEKQRLQQNNQEMV.

Residues 5–267 (VIIFDTTLRD…HTNINHQEIY (263 aa)) form the Pyruvate carboxyltransferase domain. Residues aspartate 14, histidine 202, histidine 204, and asparagine 238 each contribute to the Mn(2+) site. The segment at 392–520 (RLDYFSVQSG…RLQQNNQEMV (129 aa)) is regulatory domain.

This sequence belongs to the alpha-IPM synthase/homocitrate synthase family. LeuA type 1 subfamily. In terms of assembly, homodimer. Requires Mn(2+) as cofactor.

The protein resides in the cytoplasm. It carries out the reaction 3-methyl-2-oxobutanoate + acetyl-CoA + H2O = (2S)-2-isopropylmalate + CoA + H(+). Its pathway is amino-acid biosynthesis; L-leucine biosynthesis; L-leucine from 3-methyl-2-oxobutanoate: step 1/4. Functionally, catalyzes the condensation of the acetyl group of acetyl-CoA with 3-methyl-2-oxobutanoate (2-ketoisovalerate) to form 3-carboxy-3-hydroxy-4-methylpentanoate (2-isopropylmalate). The protein is 2-isopropylmalate synthase of Yersinia enterocolitica serotype O:8 / biotype 1B (strain NCTC 13174 / 8081).